A 504-amino-acid polypeptide reads, in one-letter code: Maturase K (504 aa).

Belongs to the intron maturase 2 family. MatK subfamily.

The protein resides in the plastid. It localises to the chloroplast. Functionally, usually encoded in the trnK tRNA gene intron. Probably assists in splicing its own and other chloroplast group II introns. This is Maturase K from Quercus cerris (Turkey oak).